The sequence spans 581 residues: DNA polymerase alpha subunit B (581 aa).

The protein belongs to the DNA polymerase alpha subunit B family. In terms of assembly, DNA polymerase alpha:primase is a four subunit enzyme complex, which is assembled throughout the cell cycle, and consists of the two DNA polymerase subunits A and B, and the DNA primase large and small subunits. Subunit B binds to subunit A.

Its subcellular location is the nucleus. In terms of biological role, may play an essential role at the early stage of chromosomal DNA replication by coupling the polymerase alpha/primase complex to the cellular replication machinery. Required for the distribution of pie-1 in cell divsion. The polypeptide is DNA polymerase alpha subunit B (div-1) (Caenorhabditis elegans).